The sequence spans 371 residues: Probable beta-1,4-xylosyltransferase GT43A (371 aa).

The Cytoplasmic portion of the chain corresponds to 1–19 (MGTAAVAAAERPKQRRSSH). A helical; Signal-anchor for type II membrane protein transmembrane segment spans residues 20 to 42 (LWKKALLHFSLCFVMGFFTGFAP). Over 43–371 (SSSSSWRAGS…TSTPKTHNRR (329 aa)) the chain is Lumenal. N-linked (GlcNAc...) asparagine glycosylation is found at N176 and N299.

The protein belongs to the glycosyltransferase 43 family.

It localises to the golgi apparatus membrane. Its function is as follows. Probable beta-1,4-xylosyltransferase involved in xylan biosynthesis in cell walls. The polypeptide is Probable beta-1,4-xylosyltransferase GT43A (Oryza sativa subsp. japonica (Rice)).